The sequence spans 749 residues: Protein kinase domain-containing protein ppk32 (749 aa).

Residues 21–317 (IQKENSVQVG…MFELERSPYF (297 aa)) form the Protein kinase domain. 2 disordered regions span residues 598–677 (KKLQ…VTAK) and 706–749 (PLIP…KSLL). A compositionally biased stretch (polar residues) spans 602–651 (SKPSSVVPNRITTDPFSSQTKEATSKPSSISPNKATTNIFTSQASLSSQG). Serine 632 is modified (phosphoserine). Low complexity-rich tracts occupy residues 657 to 670 (SSAS…QRAS) and 721 to 735 (NRRV…NTVT).

It is found in the cytoplasm. In Schizosaccharomyces pombe (strain 972 / ATCC 24843) (Fission yeast), this protein is Protein kinase domain-containing protein ppk32 (ppk32).